The primary structure comprises 151 residues: MTTNTHTLQIEEILELLPHRFPFLLVDRVLDFEEGRFLRAVKNVSVNEPFFQGHFPGKPIFPGVLILEAMAQATGILAFKSVGKLEPGELYYFAGIDEARFKRPVVPGDQMIMEVTFEKTRRGLTRFKGVALVDGKVVCEATMMCARSREA.

Residue His54 is part of the active site.

This sequence belongs to the thioester dehydratase family. FabZ subfamily. In terms of assembly, oligomer. The N-terminus is blocked.

The protein localises to the cytoplasm. It catalyses the reaction a (3R)-hydroxyacyl-[ACP] = a (2E)-enoyl-[ACP] + H2O. Involved in unsaturated fatty acids biosynthesis. Catalyzes the dehydration of short chain beta-hydroxyacyl-ACPs and long chain saturated and unsaturated beta-hydroxyacyl-ACPs. The sequence is that of 3-hydroxyacyl-[acyl-carrier-protein] dehydratase FabZ from Escherichia coli (strain SE11).